The chain runs to 99 residues: A-type ATP synthase subunit F (99 aa).

Belongs to the V-ATPase F subunit family. As to quaternary structure, has multiple subunits with at least A(3), B(3), C, D, E, F, H, I and proteolipid K(x).

It is found in the cell membrane. In terms of biological role, component of the A-type ATP synthase that produces ATP from ADP in the presence of a proton gradient across the membrane. This chain is A-type ATP synthase subunit F, found in Methanococcus vannielii (strain ATCC 35089 / DSM 1224 / JCM 13029 / OCM 148 / SB).